The sequence spans 411 residues: Chorismate synthase (411 aa).

NADP(+) contacts are provided by Arg40 and Arg46. Residues 135-137 (RAS) and 256-257 (QA) each bind FMN. The interval 278 to 299 (HDGIARGADGRPRRTSDRAGGI) is disordered. Positions 285–294 (ADGRPRRTSD) are enriched in basic and acidic residues. FMN-binding positions include Ala301, 316-320 (KPIAT), and Arg342.

It belongs to the chorismate synthase family. In terms of assembly, homotetramer. Requires FMNH2 as cofactor.

The catalysed reaction is 5-O-(1-carboxyvinyl)-3-phosphoshikimate = chorismate + phosphate. It functions in the pathway metabolic intermediate biosynthesis; chorismate biosynthesis; chorismate from D-erythrose 4-phosphate and phosphoenolpyruvate: step 7/7. Its function is as follows. Catalyzes the anti-1,4-elimination of the C-3 phosphate and the C-6 proR hydrogen from 5-enolpyruvylshikimate-3-phosphate (EPSP) to yield chorismate, which is the branch point compound that serves as the starting substrate for the three terminal pathways of aromatic amino acid biosynthesis. This reaction introduces a second double bond into the aromatic ring system. The sequence is that of Chorismate synthase from Micrococcus luteus (strain ATCC 4698 / DSM 20030 / JCM 1464 / CCM 169 / CCUG 5858 / IAM 1056 / NBRC 3333 / NCIMB 9278 / NCTC 2665 / VKM Ac-2230) (Micrococcus lysodeikticus).